Consider the following 567-residue polypeptide: Oxygen-dependent choline dehydrogenase (567 aa).

6 to 35 (DYIIVGAGSAGNTLATRLTEDEGVTVLLLE) contacts FAD. The interval 182–203 (QQEGFGPMDRTVTPKGRRASTA) is disordered. His475 acts as the Proton acceptor in catalysis.

Belongs to the GMC oxidoreductase family. The cofactor is FAD.

It catalyses the reaction choline + A = betaine aldehyde + AH2. The enzyme catalyses betaine aldehyde + NAD(+) + H2O = glycine betaine + NADH + 2 H(+). It participates in amine and polyamine biosynthesis; betaine biosynthesis via choline pathway; betaine aldehyde from choline (cytochrome c reductase route): step 1/1. In terms of biological role, involved in the biosynthesis of the osmoprotectant glycine betaine. Catalyzes the oxidation of choline to betaine aldehyde and betaine aldehyde to glycine betaine at the same rate. This chain is Oxygen-dependent choline dehydrogenase, found in Pseudomonas fluorescens (strain ATCC BAA-477 / NRRL B-23932 / Pf-5).